The chain runs to 332 residues: Fructose-1,6-bisphosphatase class 1 (332 aa).

Mg(2+) contacts are provided by Glu-93, Asp-113, Leu-115, and Asp-116. Residues 116 to 119 (DGSS), Asn-209, Tyr-235, and Lys-272 contribute to the substrate site. A Mg(2+)-binding site is contributed by Glu-278.

It belongs to the FBPase class 1 family. In terms of assembly, homotetramer. The cofactor is Mg(2+).

The protein localises to the cytoplasm. The enzyme catalyses beta-D-fructose 1,6-bisphosphate + H2O = beta-D-fructose 6-phosphate + phosphate. It participates in carbohydrate biosynthesis; gluconeogenesis. The chain is Fructose-1,6-bisphosphatase class 1 from Syntrophus aciditrophicus (strain SB).